A 364-amino-acid chain; its full sequence is 2-oxoglutarate-dependent dioxygenase imqE (364 aa).

The interval 73-92 is disordered; it reads KQKAAHPPGPNPQRGWSGIG. Residues 199–315 enclose the Fe2OG dioxygenase domain; the sequence is DGSELRLLHY…RWSAAYFFKA (117 aa). 3 residues coordinate Fe cation: H227, D229, and H287. Position 306 (R306) interacts with 2-oxoglutarate.

This sequence belongs to the iron/ascorbate-dependent oxidoreductase family. Fe(2+) is required as a cofactor.

It participates in secondary metabolite biosynthesis. In terms of biological role, 2-oxoglutarate-dependent dioxygenase; part of the gene cluster that mediates the biosynthesis of imizoquins A to D, tripeptide-derived alkaloids that serve a protective role against oxidative stress that are essential for normal germination. ImqB is a canonical three-module NRPS that assembles the tripeptide backbone of the imizoquins via condensation of Trp, Tyr, and Leu-derived precursors. N-methylation by imqF and phenol oxidation by imqC, followed by cyclization via the FAD-dependent oxidase imqH carry out the three-step transformation of L-tyrosine into tetrahydroisoquinoline. Importantly, this sequence requires the presence of a free amine in the tyrosine moiety, indicating that isoquinoline formation occurs prior to peptide bond formation. The imidazolidin-4-one ring of imizoquins could form following additional oxidation of the methyl-derived bridgehead carbon by imqH. Lastly, O-methylation by imqG and leucine hydroxylation by imqE complete biosynthesis of the imizoquins. In Aspergillus flavus (strain ATCC 200026 / FGSC A1120 / IAM 13836 / NRRL 3357 / JCM 12722 / SRRC 167), this protein is 2-oxoglutarate-dependent dioxygenase imqE.